We begin with the raw amino-acid sequence, 292 residues long: MTEFDLSTREGRWKHFGSVDPVKGTKPTTKNEMTDLQSTHKNFLFEIEEVGIKNLTYPVLIDQYQTAGLFSFSTSLNKNEKGINMSRILESVEKHYDNGIELEFNTLHQLLRTLQDKMNQNAAGVDVSGKWFFDRYSPVTHIKAVGHADVTYGLAIENHTVTRKELTIQAKVTTLCPCSKEISEYSAHNQRGIVTVKAYLDKNNDVIDDYKNKILDAMEANASSILYPILKRPDEKRVTERAYENPRFVEDLIRLIAADLVEFDWIEGFDIECRNEESIHQHDAFARLKYRK.

Belongs to the GTP cyclohydrolase IV family.

The catalysed reaction is GTP + H2O = 7,8-dihydroneopterin 3'-triphosphate + formate + H(+). It participates in cofactor biosynthesis; 7,8-dihydroneopterin triphosphate biosynthesis; 7,8-dihydroneopterin triphosphate from GTP: step 1/1. Converts GTP to 7,8-dihydroneopterin triphosphate. This Staphylococcus epidermidis (strain ATCC 35984 / DSM 28319 / BCRC 17069 / CCUG 31568 / BM 3577 / RP62A) protein is GTP cyclohydrolase FolE2.